Reading from the N-terminus, the 418-residue chain is Fumarylacetoacetase (418 aa).

D127 lines the Ca(2+) pocket. Catalysis depends on H134, which acts as the Proton acceptor. Residues E200, E202, and D235 each coordinate Ca(2+). Mg(2+)-binding residues include D235, K255, and T259.

The protein belongs to the FAH family. Ca(2+) is required as a cofactor. The cofactor is Mg(2+). As to expression, highly expressed in the intestine and the hypodermis.

The enzyme catalyses 4-fumarylacetoacetate + H2O = acetoacetate + fumarate + H(+). It participates in amino-acid degradation; L-phenylalanine degradation; acetoacetate and fumarate from L-phenylalanine: step 6/6. Functionally, fumarylacetoacetase involved in the tyrosine degradation pathway. This is Fumarylacetoacetase from Caenorhabditis elegans.